The following is a 71-amino-acid chain: Dermonecrotic toxin LgSicTox-alphaI-Loxn-A (71 aa).

Histidine 12 is an active-site residue. Residues glutamate 32, aspartate 34, and aspartate 48 each coordinate Mg(2+).

Mg(2+) is required as a cofactor. Post-translationally, contains 2 disulfide bonds. As to expression, expressed by the venom gland.

Its subcellular location is the secreted. It catalyses the reaction an N-(acyl)-sphingosylphosphocholine = an N-(acyl)-sphingosyl-1,3-cyclic phosphate + choline. The enzyme catalyses an N-(acyl)-sphingosylphosphoethanolamine = an N-(acyl)-sphingosyl-1,3-cyclic phosphate + ethanolamine. The catalysed reaction is a 1-acyl-sn-glycero-3-phosphocholine = a 1-acyl-sn-glycero-2,3-cyclic phosphate + choline. It carries out the reaction a 1-acyl-sn-glycero-3-phosphoethanolamine = a 1-acyl-sn-glycero-2,3-cyclic phosphate + ethanolamine. Catalyzes the hydrolysis of sphingomyelin. May also act on other phosphatidyl esters. Its function is as follows. Dermonecrotic toxins cleave the phosphodiester linkage between the phosphate and headgroup of certain phospholipids (sphingolipid and lysolipid substrates), forming an alcohol (often choline) and a cyclic phosphate. This toxin acts on sphingomyelin (SM). It may also act on ceramide phosphoethanolamine (CPE), lysophosphatidylcholine (LPC) and lysophosphatidylethanolamine (LPE), but not on lysophosphatidylserine (LPS), and lysophosphatidylglycerol (LPG). It acts by transphosphatidylation, releasing exclusively cyclic phosphate products as second products. In vivo, induces dermonecrosis, but is not lethal. Induces hemolysis, vascular permeability, edema, inflammatory response, and platelet aggregation. This is Dermonecrotic toxin LgSicTox-alphaI-Loxn-A from Loxosceles gaucho (Spider).